The chain runs to 182 residues: Protein YIPF6 homolog (182 aa).

Topologically, residues 1-45 (MIESENPNTLDEPVIQTILRDLKMIGFKLYHVILPRGNAANVLRD) are cytoplasmic. Residues 46-66 (WDLWGPLILCLVMAIFLSISA) traverse the membrane as a helical segment. Residues 67–70 (EEQK) are Lumenal-facing. A helical transmembrane segment spans residues 71 to 91 (ALEFTIVFVVVWCGAAIVTVN). The Cytoplasmic segment spans residues 92–104 (GQLLCGNISFFQS). A helical membrane pass occupies residues 105 to 125 (VCILGYCIFPLTIATIIIWII). The Lumenal portion of the chain corresponds to 126–133 (QNFTMIVK). Residues 134-154 (LPIVGGAWFWSSFASYGFLGS) traverse the membrane as a helical segment. Residues 155–161 (SVPESRR) are Cytoplasmic-facing. Residues 162 to 182 (LLAVYPVLLFYLVIAWLVVVQ) form a helical membrane-spanning segment.

The protein belongs to the YIP1 family.

The protein resides in the golgi apparatus membrane. This Dictyostelium discoideum (Social amoeba) protein is Protein YIPF6 homolog (yipf6).